We begin with the raw amino-acid sequence, 151 residues long: MPDLYAYTDGACSGNPGPGGWGVLMLAREGEAVVKERTLQGGEVLTTNNRMELMAAISALEALTRPTEITIVTDSAYVKNGVTTWIHGWKRNGWKTADRKPVKNAELWERLDAAQQRHKVVWRWIKGHAGHAENERADELARAGMAPFKTR.

One can recognise an RNase H type-1 domain in the interval 1–146; sequence MPDLYAYTDG…ADELARAGMA (146 aa). Mg(2+)-binding residues include D9, E52, D74, and D138.

It belongs to the RNase H family. In terms of assembly, monomer. Mg(2+) is required as a cofactor.

It localises to the cytoplasm. The catalysed reaction is Endonucleolytic cleavage to 5'-phosphomonoester.. Endonuclease that specifically degrades the RNA of RNA-DNA hybrids. This chain is Ribonuclease H, found in Cereibacter sphaeroides (strain ATCC 17029 / ATH 2.4.9) (Rhodobacter sphaeroides).